Reading from the N-terminus, the 29-residue chain is Cyclotide mden-C (29 aa).

Positions 1-29 (GKPICGETCFKGKCYTPGCTCSYPVCKKN) form a cross-link, cyclopeptide (Gly-Asn). 3 disulfide bridges follow: C5/C19, C9/C21, and C14/C26.

This sequence belongs to the cyclotide family. In terms of processing, this is a cyclic peptide.

Its function is as follows. Probably participates in a plant defense mechanism. This Melicytus dentatus (Tree violet) protein is Cyclotide mden-C.